The primary structure comprises 86 residues: Small ribosomal subunit protein uS15 (86 aa).

It belongs to the universal ribosomal protein uS15 family. Part of the 30S ribosomal subunit. Forms a bridge to the 50S subunit in the 70S ribosome, contacting the 23S rRNA.

Its function is as follows. One of the primary rRNA binding proteins, it binds directly to 16S rRNA where it helps nucleate assembly of the platform of the 30S subunit by binding and bridging several RNA helices of the 16S rRNA. Forms an intersubunit bridge (bridge B4) with the 23S rRNA of the 50S subunit in the ribosome. This Ruthia magnifica subsp. Calyptogena magnifica protein is Small ribosomal subunit protein uS15.